The chain runs to 150 residues: FAD synthase (150 aa).

ATP is bound by residues 11–12 (TF), 16–19 (HPGH), aspartate 96, and tyrosine 124.

It belongs to the archaeal FAD synthase family. Homodimer. Requires a divalent metal cation as cofactor.

The enzyme catalyses FMN + ATP + H(+) = FAD + diphosphate. It functions in the pathway cofactor biosynthesis; FAD biosynthesis; FAD from FMN: step 1/1. Catalyzes the transfer of the AMP portion of ATP to flavin mononucleotide (FMN) to produce flavin adenine dinucleotide (FAD) coenzyme. The sequence is that of FAD synthase from Methanococcus maripaludis (strain C5 / ATCC BAA-1333).